The following is a 103-amino-acid chain: MAAISINVSTVKPLGDRVFVKVSASEEKTAGGILLPDTAKEKPQIGEIVTVGPGKRNDDGSRSEPEVKVGDKVLYSKYAGTDIKLGGEDYVLLSEKDILAVVD.

This sequence belongs to the GroES chaperonin family. As to quaternary structure, heptamer of 7 subunits arranged in a ring. Interacts with the chaperonin GroEL.

It localises to the cytoplasm. In terms of biological role, together with the chaperonin GroEL, plays an essential role in assisting protein folding. The GroEL-GroES system forms a nano-cage that allows encapsulation of the non-native substrate proteins and provides a physical environment optimized to promote and accelerate protein folding. GroES binds to the apical surface of the GroEL ring, thereby capping the opening of the GroEL channel. This Rippkaea orientalis (strain PCC 8801 / RF-1) (Cyanothece sp. (strain PCC 8801)) protein is Co-chaperonin GroES.